The sequence spans 130 residues: Glycine cleavage system H protein (130 aa).

Residues 24–106 (TVTIGITDHA…YDEGWFFKVK (83 aa)) form the Lipoyl-binding domain. Residue K65 is modified to N6-lipoyllysine.

This sequence belongs to the GcvH family. In terms of assembly, the glycine cleavage system is composed of four proteins: P, T, L and H. (R)-lipoate serves as cofactor.

In terms of biological role, the glycine cleavage system catalyzes the degradation of glycine. The H protein shuttles the methylamine group of glycine from the P protein to the T protein. The chain is Glycine cleavage system H protein from Teredinibacter turnerae (strain ATCC 39867 / T7901).